We begin with the raw amino-acid sequence, 556 residues long: Probable glucomannan 4-beta-mannosyltransferase 3 (556 aa).

The helical transmembrane segment at 56-76 (IFVFIPILKCLVTICLVMSLL) threads the bilayer. The active site involves Asp-159. Substrate contacts are provided by Asp-218 and Asp-220. Asp-312 is an active-site residue. Helical transmembrane passes span 391-411 (IVVH…TVLF), 428-448 (ITIL…FWIL), 509-529 (LVVG…GGSY), and 530-550 (FYVY…GYIG).

The protein belongs to the glycosyltransferase 2 family. Plant cellulose synthase-like A subfamily.

The protein resides in the golgi apparatus membrane. It catalyses the reaction GDP-mannose + (glucomannan)n = GDP + (glucomannan)n+1.. In terms of biological role, probable mannan synthase which consists of a 4-beta-mannosyltransferase activity on mannan using GDP-mannose. The beta-1,4-mannan product is the backbone for galactomannan synthesis by galactomannan galactosyltransferase. Galactomannan is a noncellulosic polysaccharides of plant cell wall. The polypeptide is Probable glucomannan 4-beta-mannosyltransferase 3 (Arabidopsis thaliana (Mouse-ear cress)).